A 201-amino-acid chain; its full sequence is Achaete-scute complex protein T5 (201 aa).

Positions 1 to 10 (MALGSENHSV) are enriched in polar residues. The segment at 1-32 (MALGSENHSVFNDDEESSSAFNGPSVIRRNAR) is disordered. The bHLH domain occupies 24–90 (PSVIRRNARE…KMAVEYIRRL (67 aa)).

In terms of assembly, efficient DNA binding requires dimerization with another bHLH protein. L(1)SC, SC and AC strongly label the presumptive stomatogastric nervous system, while ASE is more prominent in the presumptive procephalic lobe.

Functionally, AS-C proteins are involved in the determination of the neuronal precursors in the peripheral nervous system and the central nervous system. This chain is Achaete-scute complex protein T5 (ac), found in Drosophila melanogaster (Fruit fly).